A 487-amino-acid polypeptide reads, in one-letter code: Protein nucleotidyltransferase YdiU (487 aa).

Residues glycine 91, glycine 93, arginine 94, lysine 114, aspartate 126, glycine 127, arginine 177, and arginine 184 each contribute to the ATP site. Aspartate 253 serves as the catalytic Proton acceptor. Mg(2+)-binding residues include asparagine 254 and aspartate 263. An ATP-binding site is contributed by aspartate 263.

This sequence belongs to the SELO family. Mg(2+) is required as a cofactor. The cofactor is Mn(2+).

The enzyme catalyses L-seryl-[protein] + ATP = 3-O-(5'-adenylyl)-L-seryl-[protein] + diphosphate. It catalyses the reaction L-threonyl-[protein] + ATP = 3-O-(5'-adenylyl)-L-threonyl-[protein] + diphosphate. It carries out the reaction L-tyrosyl-[protein] + ATP = O-(5'-adenylyl)-L-tyrosyl-[protein] + diphosphate. The catalysed reaction is L-histidyl-[protein] + UTP = N(tele)-(5'-uridylyl)-L-histidyl-[protein] + diphosphate. The enzyme catalyses L-seryl-[protein] + UTP = O-(5'-uridylyl)-L-seryl-[protein] + diphosphate. It catalyses the reaction L-tyrosyl-[protein] + UTP = O-(5'-uridylyl)-L-tyrosyl-[protein] + diphosphate. Functionally, nucleotidyltransferase involved in the post-translational modification of proteins. It can catalyze the addition of adenosine monophosphate (AMP) or uridine monophosphate (UMP) to a protein, resulting in modifications known as AMPylation and UMPylation. The protein is Protein nucleotidyltransferase YdiU of Yersinia pestis (strain Pestoides F).